A 716-amino-acid chain; its full sequence is DNA ligase (716 aa).

NAD(+) contacts are provided by residues 47–51, 96–97, and Glu130; these read DATYD and SL. Lys132 functions as the N6-AMP-lysine intermediate in the catalytic mechanism. NAD(+)-binding residues include Arg153, Glu190, Lys306, and Lys330. Residues Cys435, Cys438, Cys453, and Cys459 each contribute to the Zn(2+) site. In terms of domain architecture, BRCT spans 638 to 716; the sequence is RSDSAVAGKT…EDEWLKLIEG (79 aa).

This sequence belongs to the NAD-dependent DNA ligase family. LigA subfamily. Mg(2+) serves as cofactor. It depends on Mn(2+) as a cofactor.

The catalysed reaction is NAD(+) + (deoxyribonucleotide)n-3'-hydroxyl + 5'-phospho-(deoxyribonucleotide)m = (deoxyribonucleotide)n+m + AMP + beta-nicotinamide D-nucleotide.. In terms of biological role, DNA ligase that catalyzes the formation of phosphodiester linkages between 5'-phosphoryl and 3'-hydroxyl groups in double-stranded DNA using NAD as a coenzyme and as the energy source for the reaction. It is essential for DNA replication and repair of damaged DNA. In Nitrobacter winogradskyi (strain ATCC 25391 / DSM 10237 / CIP 104748 / NCIMB 11846 / Nb-255), this protein is DNA ligase.